Reading from the N-terminus, the 407-residue chain is ATP phosphoribosyltransferase regulatory subunit (407 aa).

It belongs to the class-II aminoacyl-tRNA synthetase family. HisZ subfamily. As to quaternary structure, heteromultimer composed of HisG and HisZ subunits.

Its subcellular location is the cytoplasm. It participates in amino-acid biosynthesis; L-histidine biosynthesis; L-histidine from 5-phospho-alpha-D-ribose 1-diphosphate: step 1/9. In terms of biological role, required for the first step of histidine biosynthesis. May allow the feedback regulation of ATP phosphoribosyltransferase activity by histidine. The polypeptide is ATP phosphoribosyltransferase regulatory subunit (Rippkaea orientalis (strain PCC 8801 / RF-1) (Cyanothece sp. (strain PCC 8801))).